The primary structure comprises 131 residues: D-ribose pyranase (131 aa).

The active-site Proton donor is the H20. Substrate is bound by residues D28, H98, and 120–122; that span reads YAN.

It belongs to the RbsD / FucU family. RbsD subfamily. Homodecamer.

The protein resides in the cytoplasm. It catalyses the reaction beta-D-ribopyranose = beta-D-ribofuranose. It functions in the pathway carbohydrate metabolism; D-ribose degradation; D-ribose 5-phosphate from beta-D-ribopyranose: step 1/2. Functionally, catalyzes the interconversion of beta-pyran and beta-furan forms of D-ribose. In Bacillus cereus (strain 03BB102), this protein is D-ribose pyranase.